Here is a 173-residue protein sequence, read N- to C-terminus: Crossover junction endodeoxyribonuclease RuvC (173 aa).

Catalysis depends on residues D8, E67, and D139. Residues D8, E67, and D139 each coordinate Mg(2+).

Belongs to the RuvC family. Homodimer which binds Holliday junction (HJ) DNA. The HJ becomes 2-fold symmetrical on binding to RuvC with unstacked arms; it has a different conformation from HJ DNA in complex with RuvA. In the full resolvosome a probable DNA-RuvA(4)-RuvB(12)-RuvC(2) complex forms which resolves the HJ. It depends on Mg(2+) as a cofactor.

Its subcellular location is the cytoplasm. It carries out the reaction Endonucleolytic cleavage at a junction such as a reciprocal single-stranded crossover between two homologous DNA duplexes (Holliday junction).. The RuvA-RuvB-RuvC complex processes Holliday junction (HJ) DNA during genetic recombination and DNA repair. Endonuclease that resolves HJ intermediates. Cleaves cruciform DNA by making single-stranded nicks across the HJ at symmetrical positions within the homologous arms, yielding a 5'-phosphate and a 3'-hydroxyl group; requires a central core of homology in the junction. The consensus cleavage sequence is 5'-(A/T)TT(C/G)-3'. Cleavage occurs on the 3'-side of the TT dinucleotide at the point of strand exchange. HJ branch migration catalyzed by RuvA-RuvB allows RuvC to scan DNA until it finds its consensus sequence, where it cleaves and resolves the cruciform DNA. The chain is Crossover junction endodeoxyribonuclease RuvC from Photobacterium profundum (strain SS9).